The primary structure comprises 196 residues: Small ribosomal subunit protein uS4c (196 aa).

The tract at residues 15–42 (LGALPGLTRKTPKSGSNQKKKFNSGKKE) is disordered. In terms of domain architecture, S4 RNA-binding spans 89–150 (MRLDNILFRL…NQRSKRLVQN (62 aa)).

It belongs to the universal ribosomal protein uS4 family. As to quaternary structure, part of the 30S ribosomal subunit. Contacts protein S5. The interaction surface between S4 and S5 is involved in control of translational fidelity.

The protein localises to the plastid. It localises to the chloroplast. Functionally, one of the primary rRNA binding proteins, it binds directly to 16S rRNA where it nucleates assembly of the body of the 30S subunit. In terms of biological role, with S5 and S12 plays an important role in translational accuracy. The protein is Small ribosomal subunit protein uS4c (rps4) of Cenchrus longisetus (Feathertop).